Consider the following 537-residue polypeptide: Carboxypeptidase Y homolog A (537 aa).

The signal sequence occupies residues 1 to 17; sequence MRLSTSALVLGAASSAV. Positions 18-124 are excised as a propeptide; sequence AFDQKVLGDL…RLDNYNLRAK (107 aa). 5 disulfide bridges follow: Cys178–Cys418, Cys312–Cys326, Cys336–Cys359, Cys343–Cys352, and Cys381–Cys388. An N-linked (GlcNAc...) asparagine glycan is attached at Asn209. The active site involves Ser265. Residue Asp457 is part of the active site. An N-linked (GlcNAc...) asparagine glycan is attached at Asn503. His514 is an active-site residue.

Belongs to the peptidase S10 family.

The protein localises to the vacuole. It catalyses the reaction Release of a C-terminal amino acid with broad specificity.. Functionally, vacuolar carboxypeptidase involved in degradation of small peptides. Digests preferentially peptides containing an aliphatic or hydrophobic residue in P1' position, as well as methionine, leucine or phenylalanine in P1 position of ester substrate. The polypeptide is Carboxypeptidase Y homolog A (CPYA) (Fusarium vanettenii (strain ATCC MYA-4622 / CBS 123669 / FGSC 9596 / NRRL 45880 / 77-13-4) (Fusarium solani subsp. pisi)).